The following is a 514-amino-acid chain: F-box-like/WD repeat-containing protein TBL1XR1 (514 aa).

The residue at position 2 (serine 2) is an N-acetylserine. Positions 4–36 (SSDEVNFLVYRYLQESGFSHSAFTFGIESHISQ) constitute a LisH domain. The F-box-like domain maps to 41–86 (GALVPPAALISIIQKGLQYVEAEVSINEDGTLFDGRPIESLSLIDA). The residue at position 102 (lysine 102) is an N6-acetyllysine. Residue serine 119 is modified to Phosphoserine. The span at 120 to 135 (QQGSAKNGENTANGEE) shows a compositional bias: low complexity. Residues 120-139 (QQGSAKNGENTANGEENGAH) are disordered. WD repeat units lie at residues 167–206 (GHESEVFICAWNPVSDLLASGSGDSTARIWNLSENSTSGS), 223–262 (PSNKDVTSLDWNSEGTLLATGSYDGFARIWTKDGNLASTL), 264–303 (QHKGPIFALKWNKKGNFILSAGVDKTTIIWDAHTGEAKQQ), 306–344 (FHSAPALDVDWQSNNTFASCSTDMCIHVCKLGQDRPIKT), 347–386 (GHTNEVNAIKWDPTGNLLASCSDDMTLKIWSMKQDNCVHD), 389–437 (AHNK…CIHT), 440–479 (KHQEPVYSVAFSPDGRYLASGSFDKCVHIWNTQTGALVHS), and 481–513 (RGTGGIFEVCWNAAGDKVGASASDGSVCVLDLR). Lysine 277 is covalently cross-linked (Glycyl lysine isopeptide (Lys-Gly) (interchain with G-Cter in SUMO2)).

The protein belongs to the WD repeat EBI family. As to quaternary structure, component of the N-Cor repressor complex, at least composed of NCOR1, NCOR2, HDAC3, TBL1X, TBL1XR1, CORO2A and GPS2. Probable component of some E3 ubiquitin ligase complex. Interacts with histones H2B and H4. Interacts with MECP2; bridges interaction between MECP2 and NCOR1. Interacts with USP44. As to expression, widely expressed including the pituitary, hypothalamus, white and brown adipose tissue, muscle and liver.

Its subcellular location is the nucleus. Its function is as follows. F-box-like protein involved in the recruitment of the ubiquitin/19S proteasome complex to nuclear receptor-regulated transcription units. Plays an essential role in transcription activation mediated by nuclear receptors. Probably acts as integral component of the N-Cor corepressor complex that mediates the recruitment of the 19S proteasome complex, leading to the subsequent proteasomal degradation of N-Cor complex, thereby allowing cofactor exchange, and transcription activation. This Homo sapiens (Human) protein is F-box-like/WD repeat-containing protein TBL1XR1 (TBL1XR1).